An 85-amino-acid chain; its full sequence is Putative transmembrane protein ORF28 (85 aa).

2 helical membrane-spanning segments follow: residues 32-52 (IMLL…VQIV) and 59-79 (LLSV…MLGI).

The protein resides in the host membrane. This chain is Putative transmembrane protein ORF28, found in Haloarcula hispanica (His1V).